We begin with the raw amino-acid sequence, 159 residues long: NAD(P)H-quinone oxidoreductase subunit J, chloroplastic (159 aa).

This sequence belongs to the complex I 30 kDa subunit family. In terms of assembly, NDH is composed of at least 16 different subunits, 5 of which are encoded in the nucleus. Leaves.

It is found in the plastid. The protein resides in the chloroplast thylakoid membrane. The enzyme catalyses a plastoquinone + NADH + (n+1) H(+)(in) = a plastoquinol + NAD(+) + n H(+)(out). The catalysed reaction is a plastoquinone + NADPH + (n+1) H(+)(in) = a plastoquinol + NADP(+) + n H(+)(out). Functionally, NDH shuttles electrons from NAD(P)H:plastoquinone, via FMN and iron-sulfur (Fe-S) centers, to quinones in the photosynthetic chain and possibly in a chloroplast respiratory chain. The immediate electron acceptor for the enzyme in this species is believed to be plastoquinone. Couples the redox reaction to proton translocation, and thus conserves the redox energy in a proton gradient. This chain is NAD(P)H-quinone oxidoreductase subunit J, chloroplastic, found in Zea mays (Maize).